We begin with the raw amino-acid sequence, 116 residues long: Proline-rich protein 9 (116 aa).

The polypeptide is Proline-rich protein 9 (PRR9) (Homo sapiens (Human)).